We begin with the raw amino-acid sequence, 147 residues long: 3-hydroxyacyl-[acyl-carrier-protein] dehydratase FabZ (147 aa).

Residue His50 is part of the active site.

This sequence belongs to the thioester dehydratase family. FabZ subfamily.

The protein resides in the cytoplasm. The catalysed reaction is a (3R)-hydroxyacyl-[ACP] = a (2E)-enoyl-[ACP] + H2O. Functionally, involved in unsaturated fatty acids biosynthesis. Catalyzes the dehydration of short chain beta-hydroxyacyl-ACPs and long chain saturated and unsaturated beta-hydroxyacyl-ACPs. The chain is 3-hydroxyacyl-[acyl-carrier-protein] dehydratase FabZ from Lactiplantibacillus plantarum (strain ATCC BAA-793 / NCIMB 8826 / WCFS1) (Lactobacillus plantarum).